The following is a 78-amino-acid chain: Small ribosomal subunit protein uS17 (78 aa).

The protein belongs to the universal ribosomal protein uS17 family. Part of the 30S ribosomal subunit.

Functionally, one of the primary rRNA binding proteins, it binds specifically to the 5'-end of 16S ribosomal RNA. The sequence is that of Small ribosomal subunit protein uS17 from Pelagibacter ubique (strain HTCC1062).